We begin with the raw amino-acid sequence, 221 residues long: Glutathione S-transferase alpha-3 (221 aa).

The 81-residue stretch at 3-83 (GKPVLHYFDG…YIATKYNLYG (81 aa)) folds into the GST N-terminal domain. Lys-4 is subject to N6-succinyllysine. Glutathione is bound by residues Tyr-9, Arg-45, 54-55 (QV), and 67-68 (QT). One can recognise a GST C-terminal domain in the interval 85-207 (DMKERALIDM…LQPGSQRKPL (123 aa)).

It belongs to the GST superfamily. Alpha family. As to quaternary structure, heterodimer of YC1 and YC2.

Its subcellular location is the cytoplasm. It catalyses the reaction RX + glutathione = an S-substituted glutathione + a halide anion + H(+). The catalysed reaction is androst-5-ene-3,17-dione = androst-4-ene-3,17-dione. The enzyme catalyses pregn-5-ene-3,20-dione = progesterone. In terms of biological role, conjugation of reduced glutathione to a wide number of exogenous and endogenous hydrophobic electrophiles. Catalyzes isomerization reactions that contribute to the biosynthesis of steroid hormones. Efficiently catalyze obligatory double-bond isomerizations of delta(5)-androstene-3,17-dione and delta(5)-pregnene-3,20-dione, precursors to testosterone and progesterone, respectively. Has substantial activity toward aflatoxin B1-8,9-epoxide. This chain is Glutathione S-transferase alpha-3, found in Rattus norvegicus (Rat).